Here is a 441-residue protein sequence, read N- to C-terminus: Protein dcd1A (441 aa).

The N-terminal stretch at 1-23 is a signal peptide; sequence MKIFNKLIFLIIQCILIISVTNA. N45, N261, N308, and N419 each carry an N-linked (GlcNAc...) asparagine glycan.

Its subcellular location is the secreted. The sequence is that of Protein dcd1A (dcd1A) from Dictyostelium discoideum (Social amoeba).